Consider the following 452-residue polypeptide: Netrin-5 (452 aa).

A signal peptide spans 1–34; that stretch reads MTDYRTLFSSPGAGSTVTTPITLSLLLLLSQATS. 11 disulfides stabilise this stretch: Cys173–Cys182, Cys175–Cys191, Cys193–Cys202, Cys205–Cys225, Cys228–Cys240, Cys230–Cys247, Cys249–Cys258, Cys261–Cys275, Cys298–Cys376, Cys302–Cys378, and Cys317–Cys438. Laminin EGF-like domains are found at residues 173-227 and 228-277; these read CQCH…PCLP and CQCH…PCQR. In terms of domain architecture, NTR spans 298–438; the sequence is CQGYCNVSVS…LQQKERGGAC (141 aa). Asn303 is a glycosylation site (N-linked (GlcNAc...) asparagine).

The protein localises to the secreted. Functionally, plays a role in neurogenesis. Prevents motor neuron cell body migration out of the neural tube. The sequence is that of Netrin-5 (Ntn5) from Mus musculus (Mouse).